An 81-amino-acid polypeptide reads, in one-letter code: Large ribosomal subunit protein bL31B (81 aa).

It belongs to the bacterial ribosomal protein bL31 family. Type B subfamily. In terms of assembly, part of the 50S ribosomal subunit.

This is Large ribosomal subunit protein bL31B from Bacillus cereus (strain ATCC 10987 / NRS 248).